A 219-amino-acid polypeptide reads, in one-letter code: Orotate phosphoribosyltransferase (219 aa).

A 5-phospho-alpha-D-ribose 1-diphosphate-binding site is contributed by Lys-26. Position 34–35 (34–35 (FF)) interacts with orotate. 5-phospho-alpha-D-ribose 1-diphosphate-binding positions include 72–73 (YK), Arg-98, Lys-99, Lys-102, His-104, and 124–132 (DDVITAGTA). Orotate contacts are provided by Thr-128 and Arg-156.

It belongs to the purine/pyrimidine phosphoribosyltransferase family. PyrE subfamily. Homodimer. Requires Mg(2+) as cofactor.

It catalyses the reaction orotidine 5'-phosphate + diphosphate = orotate + 5-phospho-alpha-D-ribose 1-diphosphate. It participates in pyrimidine metabolism; UMP biosynthesis via de novo pathway; UMP from orotate: step 1/2. Its function is as follows. Catalyzes the transfer of a ribosyl phosphate group from 5-phosphoribose 1-diphosphate to orotate, leading to the formation of orotidine monophosphate (OMP). The sequence is that of Orotate phosphoribosyltransferase from Xanthomonas axonopodis pv. citri (strain 306).